The sequence spans 176 residues: ATP-dependent protease subunit HslV (176 aa).

Residue Thr-5 is part of the active site. Positions 161, 164, and 167 each coordinate Na(+).

The protein belongs to the peptidase T1B family. HslV subfamily. A double ring-shaped homohexamer of HslV is capped on each side by a ring-shaped HslU homohexamer. The assembly of the HslU/HslV complex is dependent on binding of ATP.

Its subcellular location is the cytoplasm. It carries out the reaction ATP-dependent cleavage of peptide bonds with broad specificity.. With respect to regulation, allosterically activated by HslU binding. Functionally, protease subunit of a proteasome-like degradation complex believed to be a general protein degrading machinery. The chain is ATP-dependent protease subunit HslV from Thermoanaerobacter pseudethanolicus (strain ATCC 33223 / 39E) (Clostridium thermohydrosulfuricum).